The following is a 177-amino-acid chain: Large ribosomal subunit protein uL6 (177 aa).

The protein belongs to the universal ribosomal protein uL6 family. Part of the 50S ribosomal subunit.

In terms of biological role, this protein binds to the 23S rRNA, and is important in its secondary structure. It is located near the subunit interface in the base of the L7/L12 stalk, and near the tRNA binding site of the peptidyltransferase center. This Laribacter hongkongensis (strain HLHK9) protein is Large ribosomal subunit protein uL6.